Consider the following 150-residue polypeptide: Small ribosomal subunit protein uS11 (150 aa).

Residues 126-150 (GRIEDVTPTPSDSTRRKGGRRGRRL) form a disordered region. Residues 141 to 150 (RKGGRRGRRL) show a composition bias toward basic residues.

This sequence belongs to the universal ribosomal protein uS11 family. In terms of assembly, component of the small ribosomal subunit (SSU). Mature N.crassa ribosomes consist of a small (40S) and a large (60S) subunit. The 40S small subunit contains 1 molecule of ribosomal RNA (18S rRNA) and at least 32 different proteins. The large 60S subunit contains 3 rRNA molecules (26S, 5.8S and 5S rRNA) and at least 42 different proteins.

The protein resides in the cytoplasm. Its function is as follows. Component of the ribosome, a large ribonucleoprotein complex responsible for the synthesis of proteins in the cell. The small ribosomal subunit (SSU) binds messenger RNAs (mRNAs) and translates the encoded message by selecting cognate aminoacyl-transfer RNA (tRNA) molecules. The large subunit (LSU) contains the ribosomal catalytic site termed the peptidyl transferase center (PTC), which catalyzes the formation of peptide bonds, thereby polymerizing the amino acids delivered by tRNAs into a polypeptide chain. The nascent polypeptides leave the ribosome through a tunnel in the LSU and interact with protein factors that function in enzymatic processing, targeting, and the membrane insertion of nascent chains at the exit of the ribosomal tunnel. uS11 is involved in nucleolar processing of pre-18S ribosomal RNA and ribosome assembly. The protein is Small ribosomal subunit protein uS11 (rps-14) of Neurospora crassa (strain ATCC 24698 / 74-OR23-1A / CBS 708.71 / DSM 1257 / FGSC 987).